The sequence spans 229 residues: Sugar fermentation stimulation protein homolog (229 aa).

Belongs to the SfsA family.

The protein is Sugar fermentation stimulation protein homolog of Carboxydothermus hydrogenoformans (strain ATCC BAA-161 / DSM 6008 / Z-2901).